A 949-amino-acid chain; its full sequence is Nonsense-mediated mRNA decay factor SMG8 (949 aa).

3 disordered regions span residues Ser564–Thr607, Asn624–Asn652, and Pro748–Trp768. The segment covering Glu571–Val581 has biased composition (acidic residues). A compositionally biased stretch (polar residues) spans Asn594 to Thr607. The segment covering Asn624–Ala648 has biased composition (low complexity). The segment covering Lys749–Trp768 has biased composition (basic residues).

This sequence belongs to the SMG8 family.

Involved in nonsense-mediated decay (NMD) of mRNAs containing premature stop codons. Probable component of kinase complex containing nonC and recruited to stalled ribosomes. The protein is Nonsense-mediated mRNA decay factor SMG8 of Drosophila erecta (Fruit fly).